Consider the following 561-residue polypeptide: Rho guanine nucleotide exchange factor 9 (561 aa).

Residues 53-112 form the SH3 domain; sequence DSIVSAEAVWDHVTMANRELAFKAGDVIKVLDASNKDWWWGQIDDEEGWFPASFVRLWVN. Residues 145-155 form an interaction with GPHN region; the sequence is RDQMRANVINE. A DH domain is found at 148–332; that stretch reads MRANVINEIM…RNVTQQINER (185 aa). The PH domain occupies 363–470; it reads ELIYTGEMAW…WLRAFREERK (108 aa). Residues 499–524 are disordered; that stretch reads KQKGVNSARSVPPSYPPPQDPLNQGQ. Ser547 carries the phosphoserine modification.

As to quaternary structure, interacts with GPHN.

It localises to the cytoplasm. The protein resides in the postsynaptic density. In terms of biological role, acts as a guanine nucleotide exchange factor (GEF) for CDC42. Promotes formation of GPHN clusters. This Bos taurus (Bovine) protein is Rho guanine nucleotide exchange factor 9 (ARHGEF9).